The following is a 165-amino-acid chain: Transcriptional repressor NrdR (165 aa).

A zinc finger spans residues 3–34 (CPFCRNPDSRVVDSRMADDGSAIRRRRQCPEC). One can recognise an ATP-cone domain in the interval 46–136 (LTVIKRSGVG…VYQAFESLED (91 aa)).

Belongs to the NrdR family. Zn(2+) serves as cofactor.

Its function is as follows. Negatively regulates transcription of bacterial ribonucleotide reductase nrd genes and operons by binding to NrdR-boxes. In Arthrobacter sp. (strain FB24), this protein is Transcriptional repressor NrdR.